The sequence spans 208 residues: Fibroblast growth factor 6 (208 aa).

Positions 1-37 are cleaved as a signal peptide; that stretch reads MALGQRLFITMSRGAGRVQGTLQALVFLGVLVGMVVP. Residue asparagine 45 is glycosylated (N-linked (GlcNAc...) asparagine). Cysteine 90 and cysteine 157 are disulfide-bonded.

The protein belongs to the heparin-binding growth factors family. Interacts with FGFR1, FGFR2 and FGFR4. Affinity between fibroblast growth factors (FGFs) and their receptors is increased by heparan sulfate glycosaminoglycans that function as coreceptors. Embryos, adult muscles and adult testis.

The protein resides in the secreted. It localises to the extracellular space. Functionally, plays an important role in the regulation of cell proliferation, cell differentiation, angiogenesis and myogenesis, and is required for normal muscle regeneration. In Mus musculus (Mouse), this protein is Fibroblast growth factor 6 (Fgf6).